Here is a 331-residue protein sequence, read N- to C-terminus: Phenylalanine--tRNA ligase alpha subunit (331 aa).

E252 serves as a coordination point for Mg(2+).

It belongs to the class-II aminoacyl-tRNA synthetase family. Phe-tRNA synthetase alpha subunit type 1 subfamily. In terms of assembly, tetramer of two alpha and two beta subunits. Requires Mg(2+) as cofactor.

It localises to the cytoplasm. It carries out the reaction tRNA(Phe) + L-phenylalanine + ATP = L-phenylalanyl-tRNA(Phe) + AMP + diphosphate + H(+). The protein is Phenylalanine--tRNA ligase alpha subunit of Stenotrophomonas maltophilia (strain R551-3).